A 312-amino-acid polypeptide reads, in one-letter code: Pantothenate kinase (312 aa).

92-99 (GSVAVGKS) contributes to the ATP binding site.

This sequence belongs to the prokaryotic pantothenate kinase family.

It is found in the cytoplasm. The enzyme catalyses (R)-pantothenate + ATP = (R)-4'-phosphopantothenate + ADP + H(+). The protein operates within cofactor biosynthesis; coenzyme A biosynthesis; CoA from (R)-pantothenate: step 1/5. The sequence is that of Pantothenate kinase (coaA) from Vibrio cholerae serotype O1 (strain ATCC 39315 / El Tor Inaba N16961).